The chain runs to 647 residues: Beta-galactosidase (647 aa).

Positions 1 to 24 (MLRVPLCTPLPLLALLQLLGAAHG) are cleaved as a signal peptide. A propeptide spanning residues 25 to 29 (IYNVT) is cleaved from the precursor. A glycan (N-linked (GlcNAc...) asparagine) is linked at N27. Substrate contacts are provided by Y84, E130, and N188. The active-site Proton donor is E189. Residues C196 and C231 are joined by a disulfide bond. N248 is a glycosylation site (N-linked (GlcNAc...) asparagine). E269 (nucleophile) is an active-site residue. Y334 is a binding site for substrate. N-linked (GlcNAc...) asparagine glycosylation is found at N500, N504, N510, N544, N557, and N617. A disulfide bond links C628 and C636.

This sequence belongs to the glycosyl hydrolase 35 family. In terms of assembly, homodimer. May form higher multimers.

It localises to the lysosome. It carries out the reaction Hydrolysis of terminal non-reducing beta-D-galactose residues in beta-D-galactosides.. Functionally, cleaves beta-linked terminal galactosyl residues from gangliosides, glycoproteins, and glycosaminoglycans. This chain is Beta-galactosidase (Glb1), found in Mus musculus (Mouse).